The following is an 83-amino-acid chain: High-potential iron-sulfur protein (83 aa).

[4Fe-4S] cluster contacts are provided by Cys43, Cys46, Cys61, and Cys75.

The protein belongs to the high-potential iron-sulfur protein (HiPIP) family. Homodimer.

In terms of biological role, specific class of high-redox-potential 4Fe-4S ferredoxins. Functions in anaerobic electron transport in most purple and in some other photosynthetic bacteria and in at least one genus (Paracoccus) of halophilic, denitrifying bacteria. The polypeptide is High-potential iron-sulfur protein (hip) (Thermochromatium tepidum (Chromatium tepidum)).